A 968-amino-acid polypeptide reads, in one-letter code: Isoleucine--tRNA ligase (968 aa).

A 'HIGH' region motif is present at residues 68–78; sequence PYANGALHMGH. Glu582 serves as a coordination point for L-isoleucyl-5'-AMP. Residues 623–627 carry the 'KMSKS' region motif; that stretch reads KMSKS. Lys626 provides a ligand contact to ATP. The Zn(2+) site is built by Cys936, Cys939, Cys956, and Cys959.

The protein belongs to the class-I aminoacyl-tRNA synthetase family. IleS type 1 subfamily. Monomer. It depends on Zn(2+) as a cofactor.

Its subcellular location is the cytoplasm. The catalysed reaction is tRNA(Ile) + L-isoleucine + ATP = L-isoleucyl-tRNA(Ile) + AMP + diphosphate. In terms of biological role, catalyzes the attachment of isoleucine to tRNA(Ile). As IleRS can inadvertently accommodate and process structurally similar amino acids such as valine, to avoid such errors it has two additional distinct tRNA(Ile)-dependent editing activities. One activity is designated as 'pretransfer' editing and involves the hydrolysis of activated Val-AMP. The other activity is designated 'posttransfer' editing and involves deacylation of mischarged Val-tRNA(Ile). The chain is Isoleucine--tRNA ligase from Prochlorococcus marinus (strain MIT 9312).